A 315-amino-acid polypeptide reads, in one-letter code: MTDQVYVTLREDQDKLWNLFHYHKNEMIVTKSGRKMFPKLEYVVRGLTPNKLYAMMLHIEPSDDHRYKFSSGEWVKSGKAEKHREPKKLWHADGVRSGKEWMTNPVCFDRVKITNCAESTNASMIFLHSMHKYTPVMSIYESPSESPFSVPQPSTRLVTSVRLTYTEFIAVTAYQNDAVIKLKIKFNPFAKGFREGSQSDRKRNSPSADDSTTDESSSQVSSPQPKKSRTVSVSPPLMPRILPTMIPPPPAINPLFYSLPYFSHLAATGNFPPVPFQFPFGLPCFSPMSFPTPPPSLKNVKKEEQEDIEQEINVV.

The segment at residues 11-195 (EDQDKLWNLF…FNPFAKGFRE (185 aa)) is a DNA-binding region (T-box). Basic and acidic residues predominate over residues 193-203 (FREGSQSDRKR). 2 disordered regions span residues 193 to 235 (FREG…SVSP) and 293 to 315 (PPPSLKNVKKEEQEDIEQEINVV). Over residues 205–225 (SPSADDSTTDESSSQVSSPQP) the composition is skewed to low complexity. A compositionally biased stretch (acidic residues) spans 305 to 315 (QEDIEQEINVV).

Its subcellular location is the nucleus. Its function is as follows. Transcription factor. Involved in the control of early morphogenesis of the intestine, hypodermis and body-wall muscle. Involved in regulating expression of vab-7. Appears to have partially redundant function to tbx-9. The chain is T-box transcription factor tbx-8 (tbx-8) from Caenorhabditis elegans.